We begin with the raw amino-acid sequence, 258 residues long: Cobalt-precorrin-4 C(11)-methyltransferase (258 aa).

It belongs to the precorrin methyltransferase family. Homodimer.

The enzyme catalyses Co-precorrin-4 + S-adenosyl-L-methionine = Co-precorrin-5A + S-adenosyl-L-homocysteine + H(+). It functions in the pathway cofactor biosynthesis; adenosylcobalamin biosynthesis; cob(II)yrinate a,c-diamide from sirohydrochlorin (anaerobic route): step 4/10. In terms of biological role, catalyzes the methylation of C-11 in cobalt-precorrin-4 to form cobalt-precorrin-5A. The protein is Cobalt-precorrin-4 C(11)-methyltransferase (cbiF) of Priestia megaterium (Bacillus megaterium).